The primary structure comprises 368 residues: N-acetylneuraminate epimerase (368 aa).

An N-terminal signal peptide occupies residues 1 to 19 (MNKTIMALAIMMASFAANA). Kelch repeat units follow at residues 40–84 (TVYI…AFID), 86–137 (NLYV…FVHN), 139–173 (KAYV…KINA), 174–219 (HYFD…VNKG), 222–265 (TWLI…VAGG), 287–336 (ENYQ…PWNN), and 338–367 (LLII…VTVQ). Residue Glu228 is the Proton acceptor of the active site.

This sequence belongs to the NanM family. Homodimer.

It is found in the periplasm. It carries out the reaction N-acetyl-alpha-neuraminate = N-acetyl-beta-neuraminate. Functionally, converts alpha-N-acetylneuranimic acid (Neu5Ac) to the beta-anomer, accelerating the equilibrium between the alpha- and beta-anomers. Probably facilitates sialidase-negative bacteria to compete successfully for limited amounts of extracellular Neu5Ac, which is likely taken up in the beta-anomer. In addition, the rapid removal of sialic acid from solution might be advantageous to the bacterium to damp down host responses. This is N-acetylneuraminate epimerase from Shigella flexneri serotype 5b (strain 8401).